Here is a 193-residue protein sequence, read N- to C-terminus: Acyl carrier protein phosphodiesterase (193 aa).

Belongs to the AcpH family.

The enzyme catalyses holo-[ACP] + H2O = apo-[ACP] + (R)-4'-phosphopantetheine + H(+). Converts holo-ACP to apo-ACP by hydrolytic cleavage of the phosphopantetheine prosthetic group from ACP. This is Acyl carrier protein phosphodiesterase from Yersinia enterocolitica serotype O:8 / biotype 1B (strain NCTC 13174 / 8081).